The sequence spans 70 residues: MTTIKVKENEPFEVAMRRFKRTIEKTGLLTELRAREFYEKPTAERKRKLAAAVKRTYKRLRSQLLPPKLY.

The protein belongs to the bacterial ribosomal protein bS21 family.

The sequence is that of Small ribosomal subunit protein bS21 from Nitrosospira multiformis (strain ATCC 25196 / NCIMB 11849 / C 71).